The following is a 332-amino-acid chain: Glycerol-3-phosphate dehydrogenase [NAD(P)+] (332 aa).

Positions 13, 34, and 108 each coordinate NADPH. The sn-glycerol 3-phosphate site is built by Lys108, Gly136, and Ser138. NADPH is bound at residue Ala140. Residues Lys191, Asp244, Ser254, Arg255, and Asn256 each contribute to the sn-glycerol 3-phosphate site. Lys191 acts as the Proton acceptor in catalysis. Arg255 provides a ligand contact to NADPH. Positions 279 and 281 each coordinate NADPH.

It belongs to the NAD-dependent glycerol-3-phosphate dehydrogenase family.

It localises to the cytoplasm. It catalyses the reaction sn-glycerol 3-phosphate + NAD(+) = dihydroxyacetone phosphate + NADH + H(+). The enzyme catalyses sn-glycerol 3-phosphate + NADP(+) = dihydroxyacetone phosphate + NADPH + H(+). It functions in the pathway membrane lipid metabolism; glycerophospholipid metabolism. Catalyzes the reduction of the glycolytic intermediate dihydroxyacetone phosphate (DHAP) to sn-glycerol 3-phosphate (G3P), the key precursor for phospholipid synthesis. The polypeptide is Glycerol-3-phosphate dehydrogenase [NAD(P)+] (Francisella tularensis subsp. mediasiatica (strain FSC147)).